The sequence spans 507 residues: Archaeal-type glutamate synthase [NADPH] (507 aa).

2 consecutive 4Fe-4S ferredoxin-type domains span residues 10-39 (FVVE…YDEN) and 41-70 (NRVY…VRKN). 8 residues coordinate [4Fe-4S] cluster: cysteine 19, cysteine 22, cysteine 25, cysteine 29, cysteine 50, cysteine 53, cysteine 56, and cysteine 60.

It belongs to the glutamate synthase family. Requires FMN as cofactor.

It catalyses the reaction 2 L-glutamate + NADP(+) = L-glutamine + 2-oxoglutarate + NADPH + H(+). The chain is Archaeal-type glutamate synthase [NADPH] from Thermotoga maritima (strain ATCC 43589 / DSM 3109 / JCM 10099 / NBRC 100826 / MSB8).